Consider the following 537-residue polypeptide: Arginine--tRNA ligase (537 aa).

A 'HIGH' region motif is present at residues 113–123 (ANPTGRIHLGH).

This sequence belongs to the class-I aminoacyl-tRNA synthetase family. In terms of assembly, monomer.

The protein resides in the cytoplasm. It catalyses the reaction tRNA(Arg) + L-arginine + ATP = L-arginyl-tRNA(Arg) + AMP + diphosphate. The polypeptide is Arginine--tRNA ligase (argS) (Mycoplasma genitalium (strain ATCC 33530 / DSM 19775 / NCTC 10195 / G37) (Mycoplasmoides genitalium)).